The primary structure comprises 405 residues: Tryptophan synthase beta chain (405 aa).

K98 is modified (N6-(pyridoxal phosphate)lysine).

Belongs to the TrpB family. Tetramer of two alpha and two beta chains. It depends on pyridoxal 5'-phosphate as a cofactor.

It catalyses the reaction (1S,2R)-1-C-(indol-3-yl)glycerol 3-phosphate + L-serine = D-glyceraldehyde 3-phosphate + L-tryptophan + H2O. Its pathway is amino-acid biosynthesis; L-tryptophan biosynthesis; L-tryptophan from chorismate: step 5/5. Functionally, the beta subunit is responsible for the synthesis of L-tryptophan from indole and L-serine. In Stenotrophomonas maltophilia (strain K279a), this protein is Tryptophan synthase beta chain.